The primary structure comprises 1381 residues: MASITFRTPLSSQEQAFYNQKFHQLDTEDLGVVTGEAVRPLFASSGLPGQLLSQVWATVDIDNKGFLNLNEFSAALRMIAQLQNAPNQPISAALYESTPTQLASFSINQNPAPMQSGSATGNTNNTDIPALSSNDIAKFSQLFDRTAKGAQTVAGDKAKDIFLKARLPNQTLGEIWALCDRDASGVLDKSEFIMAMYLIQLCMSHHPSMNTPPAVLPTQLWDSIRLEPVVVNQPNRTTPLSANSTGVSSLTRHSTISRLSTGAFSNAASDWSLSFEKKQQFDAIFDSLDKQHAGSLSSAVLVPFFLSSRLNQETLATIWDLADIHNNAEFTKLEFAIAMFLIQKKNAGVELPDVIPNELLQSPALGLYPPNPLPQQQSAPQIAIPSRASKPSLQDMPHQVSAPAVNTQPTVPQVLPQNSNNGSLNDLLALNPSFSSPSPTKAQTVVQNNTNNSFSYDNNNGQATLQQQQPQQPPPLTHSSSGLKKFTPTSNFGQSIIKEEPEEQEQLRESSDTFSAQPPPVPKHASSPVKRTASTTLPQVPNFSVFSMPAGAATSAATGAAVGAAVGAAALGASAFSRSSNNAFKNQDLFADGEASAQLSNATTEMANLSNQVNSLSKQASITNDKKSRATQELKRVTEMKNSIQIKLNNLRSTHDQNVKQTEQLEAQVLQVNKENETLAQQLAVSEANYHAAESKLNELTTDLQESQTKNAELKEQITNLNSMTASLQSQLNEKQQQVKQERSMVDVNSKQLELNQVTVANLQKEIDGLGEKISVYLTKQKELNDYQKTVEEQHAQLQAKYQDLSNKDTDLTDREKQLEERNRQIEEQENLYHQHVSKLQEMFDDLSQRKASFEKADQELKERNIEYANNVRELSERQMNLAMGQLPEDAKDIIAKSASNTDTTTKEATSRGNVHEDTVSKFVETTVENSNLNVNRVKDDEEKTERTESDVFDRDVPTLGSQSDSENANTNNGTQSGNETANPNLTETLSDRFDGDLNEYGIPRSQSLTSSVANNAPQSVRDDVELPETLEERDTINNTANRDNTGNLSHIPGEWEATPATASTDVLSNETTEVIEDGSTTKRANSNEDGESVSSIQESPKISAQPKAKTINEEFPPIQELHIDESDSSSSDDDEFEDTREIPSATVKTLQTPYNAQPTSSLEIHTEQVIKYPAPGTSPSHNEGNSKKASTNSILPVKDEFDDEFAGLEQAAVEEDNGADSESEFENVANAGSMEQFETIDHKDLDDELQMNAFTGTLTSSSNPTIPKPQVQQQSTSDPAQVSNDEWDEIFAGFGNSKAEPTKVATPSIPQQPIPLKNDPIVDASLSKGPIVNRGVATTPKSLAVEELSGMGFTEEEAHNALEKCNWDLEAATNFLLDSA.

EH domains follow at residues Glu-14–Pro-113 and Asp-135–Glu-227. 2 consecutive EF-hand domains span residues Leu-47 to Leu-82 and Leu-167 to Cys-202. Positions 180, 182, 184, and 191 each coordinate Ca(2+). Thr-238 is subject to Phosphothreonine. Ser-241 and Ser-244 each carry phosphoserine. Thr-245 is modified (phosphothreonine). Phosphoserine is present on residues Ser-248 and Ser-249. The residue at position 251 (Thr-251) is a Phosphothreonine. A Phosphoserine modification is found at Ser-265. The 36-residue stretch at Glu-276–Asn-311 folds into the EF-hand 3 domain. Positions Lys-277 to Gly-366 constitute an EH 3 domain. Positions Ser-389 to Thr-535 are disordered. Composition is skewed to polar residues over residues Ala-404 to Leu-424 and Pro-432 to Gln-447. Phosphoserine is present on Ser-419. Residues Asn-448–Pro-470 are compositionally biased toward low complexity. A phosphothreonine mark is found at Thr-450, Thr-477, and Thr-487. Residues Thr-477 to Gln-494 show a composition bias toward polar residues. At Ser-495 the chain carries Phosphoserine. The stretch at Gly-593–Leu-882 forms a coiled coil. A Glycyl lysine isopeptide (Lys-Gly) (interchain with G-Cter in ubiquitin) cross-link involves residue Lys-674. Ser-848 is subject to Phosphoserine. Residues Ser-898–Thr-919 form a disordered region. Residues Thr-905 to Thr-919 are compositionally biased toward basic and acidic residues. Phosphoserine occurs at positions 931, 950, 964, 1008, 1012, and 1020. Disordered regions lie at residues Leu-933–Phe-1202, Val-1214–Asn-1285, and Ser-1298–Ile-1322. Residues Arg-937–Val-957 show a composition bias toward basic and acidic residues. Polar residues-rich tracts occupy residues Leu-960–Thr-989 and Arg-1005–Gln-1019. A compositionally biased stretch (basic and acidic residues) spans Val-1021 to Thr-1036. 2 stretches are compositionally biased toward polar residues: residues Ile-1037–Leu-1049 and Ala-1061–Thr-1073. Thr-1046 is modified (phosphothreonine). Ser-1069, Ser-1087, Ser-1093, Ser-1095, Ser-1096, and Ser-1100 each carry phosphoserine. The span at Ser-1093–Ile-1103 shows a compositional bias: polar residues. Thr-1111 carries the phosphothreonine modification. Residues Ser-1127–Asp-1139 show a composition bias toward acidic residues. Polar residues-rich tracts occupy residues Thr-1147–Glu-1164 and Thr-1178–Ile-1195. 2 positions are modified to phosphoserine: Ser-1181 and Ser-1187. The segment covering Val-1214–Phe-1226 has biased composition (acidic residues). Positions Asp-1217–Ala-1381 are able to bind biological membranes. The segment covering Asn-1253–Asn-1285 has biased composition (polar residues). The residue at position 1307 (Thr-1307) is a Phosphothreonine. Residue Lys-1329 forms a Glycyl lysine isopeptide (Lys-Gly) (interchain with G-Cter in ubiquitin) linkage. A UBA domain is found at Ala-1338 to Ser-1380. Ser-1343 is modified (phosphoserine).

The protein belongs to the VDP/USO1/EDE1 family. As to quaternary structure, interacts (via UBA domain) with monoubiquitin and ENT1 (via asparagine-proline-phenylalanine tripeptide motif called NPF). Interacts with PAL1 and SYP1.

The protein resides in the cytoplasm. Functionally, functions at the internalization step of the clathrin-mediated endocytosis (CME) as an early-acting scaffold protein. Requires clathrin adapter proteins, ENT1/2 and YAP1801/2, for normal spatiotemporal dynamics and viability. Binds to biological membranes in a ubiquitin-dependent manner. In Saccharomyces cerevisiae (strain ATCC 204508 / S288c) (Baker's yeast), this protein is EH domain-containing and endocytosis protein 1 (EDE1).